Here is a 200-residue protein sequence, read N- to C-terminus: Guanylate kinase (200 aa).

A Guanylate kinase-like domain is found at 4 to 183; it reads GAVLIISGPS…AKEAMVAIAR (180 aa). 11–18 provides a ligand contact to ATP; the sequence is GPSGCGKS.

It belongs to the guanylate kinase family.

The protein localises to the cytoplasm. The catalysed reaction is GMP + ATP = GDP + ADP. Functionally, essential for recycling GMP and indirectly, cGMP. In Helicobacter hepaticus (strain ATCC 51449 / 3B1), this protein is Guanylate kinase.